A 736-amino-acid chain; its full sequence is Subtilisin-like protease SBT4.12 (736 aa).

The first 24 residues, 1–24 (MANLAASTCLYSWLLVLLLSSVSA), serve as a signal peptide directing secretion. A propeptide spans 25–110 (IIDEDTQVYI…VFPNKILQLH (86 aa)) (activation peptide). The 79-residue stretch at 32 to 110 (VYIVYMGSLS…VFPNKILQLH (79 aa)) folds into the Inhibitor I9 domain. The 467-residue stretch at 114-580 (SWDFMGVKEG…AGHVDPMAAL (467 aa)) folds into the Peptidase S8 domain. Catalysis depends on aspartate 142, which acts as the Charge relay system. A glycan (N-linked (GlcNAc...) asparagine) is linked at asparagine 173. The active-site Charge relay system is histidine 197. Asparagine 220, asparagine 381, and asparagine 459 each carry an N-linked (GlcNAc...) asparagine glycan. The PA domain maps to 353 to 437 (KYPLVYGKSA…GLKAKDFKSL (85 aa)). The Charge relay system role is filled by serine 519. N-linked (GlcNAc...) asparagine glycosylation is found at asparagine 601, asparagine 649, and asparagine 659.

The protein belongs to the peptidase S8 family. The C-terminal propeptide is autocleaved. In terms of tissue distribution, specifically expressed in root stele of the root hair zone.

It localises to the secreted. This is Subtilisin-like protease SBT4.12 from Arabidopsis thaliana (Mouse-ear cress).